Consider the following 426-residue polypeptide: Glucan endo-1,3-beta-glucosidase 11 (426 aa).

The first 30 residues, 1–30 (MELTSFHRSSLLFLISLTLIILPTTTTSIG), serve as a signal peptide directing secretion. Asn-112 carries an N-linked (GlcNAc...) asparagine glycan. Glu-121 acts as the Proton donor in catalysis. Residue Asn-126 is glycosylated (N-linked (GlcNAc...) asparagine). Glu-266 acts as the Nucleophile in catalysis. Positions 360–372 (GGGTGGGNSSSGG) are enriched in gly residues. Residues 360 to 389 (GGGTGGGNSSSGGGRDKSPVFPVSPVAPDS) form a disordered region. Residue Asn-367 is glycosylated (N-linked (GlcNAc...) asparagine). A lipid anchor (GPI-anchor amidated serine) is attached at Ser-398. A propeptide spans 399–426 (ASPVTGKRKGKGAILSLVVSMLLARHLL) (removed in mature form).

Belongs to the glycosyl hydrolase 17 family.

It localises to the secreted. The protein resides in the cell wall. Its subcellular location is the cell membrane. The catalysed reaction is Hydrolysis of (1-&gt;3)-beta-D-glucosidic linkages in (1-&gt;3)-beta-D-glucans.. In Arabidopsis thaliana (Mouse-ear cress), this protein is Glucan endo-1,3-beta-glucosidase 11.